The following is a 266-amino-acid chain: MPPRGPASELLLLRLLLLGAATAAPLAPRPSKEELTRCLAEVVTEVLTVGQVQRGPCTALLHKELCGTEPHGCASTEEKGLLLGDFKKQEAGKMRSSQEVRDEEEEEVAERTHKSEVQEQAIRMQGHRQLHQEEDEEEEKEERKRGPMETFEDLWQRHLENGGDLQKRVAEKASDKETAQFQAEEKGVRVLGGDRSLWQGAERGGGERREDLPHHHHHHHQPEAEPRQEKEEASEREEKEVEQLEHLRDELKKVTETLGEQLRREG.

The N-terminal stretch at 1 to 23 is a signal peptide; sequence MPPRGPASELLLLRLLLLGAATA. Basic and acidic residues-rich tracts occupy residues 90–100, 154–188, 204–213, and 221–266; these read EAGKMRSSQEV, LWQR…EKGV, GGGERREDLP, and QPEA…RREG. A disordered region spans residues 90 to 266; that stretch reads EAGKMRSSQE…TLGEQLRREG (177 aa).

Expressed at higher levels in fetal brain and skeletal muscle. Lower expression is detected in fetal kidney, liver, spleen, thymus, heart and lung.

It is found in the secreted. This is Coiled-coil domain-containing glutamate-rich protein 2 (CCER2) from Homo sapiens (Human).